A 381-amino-acid chain; its full sequence is Mannitol-1-phosphate 5-dehydrogenase (381 aa).

3 to 14 (AVHFGAGNIGRG) is an NAD(+) binding site.

This sequence belongs to the mannitol dehydrogenase family.

It catalyses the reaction D-mannitol 1-phosphate + NAD(+) = beta-D-fructose 6-phosphate + NADH + H(+). The polypeptide is Mannitol-1-phosphate 5-dehydrogenase (Photobacterium profundum (strain SS9)).